The primary structure comprises 235 residues: TVP38/TMEM64 family inner membrane protein YdjZ (235 aa).

Residues 1-13 (MMMMQSRKIWYYR) are Periplasmic-facing. A helical transmembrane segment spans residues 14–34 (ITLIILLFAMLLAWALLPGVH). The Cytoplasmic portion of the chain corresponds to 35–64 (EFINRSVAAFAAVDQQGIERFIQSYGALAA). Residues 65-85 (VVSFLLMILQAIAAPLPAFLI) traverse the membrane as a helical segment. Topologically, residues 86 to 95 (TFANASLFGA) are periplasmic. The tract at residues 90–199 (ASLFGAFWGG…IVYSWAGSML (110 aa)) is VTT domain. Residues 96-116 (FWGGLLSWTSSMAGAALCFFI) form a helical membrane-spanning segment. Over 117–176 (ARVMGREVVEKLTGKTVLDSMDGFFTRYGKHTILVCRLLPFVPFDPISYAAGLTSIRFRS) the chain is Cytoplasmic. A helical transmembrane segment spans residues 177–197 (FFIATGLGQLPATIVYSWAGS). The Periplasmic segment spans residues 198–202 (MLTGG). A helical transmembrane segment spans residues 203–223 (TFWFVTGLFILFALTVVIFMA). Residues 224–235 (KKIWLERQKRNA) lie on the Cytoplasmic side of the membrane.

This sequence belongs to the TVP38/TMEM64 family.

The protein resides in the cell inner membrane. The sequence is that of TVP38/TMEM64 family inner membrane protein YdjZ (ydjZ) from Escherichia coli (strain K12).